Here is a 73-residue protein sequence, read N- to C-terminus: MQKLIILLLVAAVLMSTQALFQEKRRKEKIDLLSKRKTDAEKQHKRLCPDYTDPCSNAYECCSWNCHNGHCTG.

The signal sequence occupies residues 1–19 (MQKLIILLLVAAVLMSTQA). Residues 20-44 (LFQEKRRKEKIDLLSKRKTDAEKQH) constitute a propeptide that is removed on maturation. Disulfide bonds link cysteine 48-cysteine 62, cysteine 55-cysteine 66, and cysteine 61-cysteine 71.

It belongs to the conotoxin O2 superfamily. As to expression, expressed by the venom duct.

Its subcellular location is the secreted. In terms of biological role, inhibits voltage-gated ion channels. The polypeptide is Conotoxin Vc6.17 (Conus victoriae (Queen Victoria cone)).